A 316-amino-acid polypeptide reads, in one-letter code: Ribosomal RNA small subunit methyltransferase H (316 aa).

Residues 35–37 (GGH), D55, F79, D101, and Q108 each bind S-adenosyl-L-methionine.

It belongs to the methyltransferase superfamily. RsmH family.

It is found in the cytoplasm. It catalyses the reaction cytidine(1402) in 16S rRNA + S-adenosyl-L-methionine = N(4)-methylcytidine(1402) in 16S rRNA + S-adenosyl-L-homocysteine + H(+). Functionally, specifically methylates the N4 position of cytidine in position 1402 (C1402) of 16S rRNA. The polypeptide is Ribosomal RNA small subunit methyltransferase H (Aliivibrio fischeri (strain MJ11) (Vibrio fischeri)).